A 494-amino-acid chain; its full sequence is uncharacterized protein (494 aa).

The 2Fe-2S ferredoxin-type domain maps to 4 to 82 (FTITVKKTEG…NMIIEPLEGF (79 aa)). Residues cysteine 46, cysteine 51, cysteine 54, and cysteine 66 each contribute to the [2Fe-2S] cluster site. 2 consecutive 4Fe-4S ferredoxin-type domains span residues 127 to 157 (DLKD…NYPG) and 178 to 208 (EKEA…IVHN). Residues cysteine 137, cysteine 140, cysteine 143, cysteine 147, cysteine 189, cysteine 192, cysteine 195, and cysteine 199 each contribute to the [4Fe-4S] cluster site.

This sequence belongs to the succinate dehydrogenase/fumarate reductase iron-sulfur protein family.

This is an uncharacterized protein from Methanococcus maripaludis (strain DSM 14266 / JCM 13030 / NBRC 101832 / S2 / LL).